The sequence spans 120 residues: NAD(P)H-quinone oxidoreductase subunit 3 (120 aa).

3 consecutive transmembrane segments (helical) span residues 6 to 26 (GYDA…LALV), 64 to 84 (MFAL…PWAV), and 89 to 109 (LGLL…VALA).

Belongs to the complex I subunit 3 family. As to quaternary structure, NDH-1 can be composed of about 15 different subunits; different subcomplexes with different compositions have been identified which probably have different functions.

The protein resides in the cellular thylakoid membrane. It catalyses the reaction a plastoquinone + NADH + (n+1) H(+)(in) = a plastoquinol + NAD(+) + n H(+)(out). The catalysed reaction is a plastoquinone + NADPH + (n+1) H(+)(in) = a plastoquinol + NADP(+) + n H(+)(out). NDH-1 shuttles electrons from an unknown electron donor, via FMN and iron-sulfur (Fe-S) centers, to quinones in the respiratory and/or the photosynthetic chain. The immediate electron acceptor for the enzyme in this species is believed to be plastoquinone. Couples the redox reaction to proton translocation, and thus conserves the redox energy in a proton gradient. Cyanobacterial NDH-1 also plays a role in inorganic carbon-concentration. In Synechococcus sp. (strain WH7803), this protein is NAD(P)H-quinone oxidoreductase subunit 3.